We begin with the raw amino-acid sequence, 296 residues long: Lipoyl synthase (296 aa).

Positions 34, 39, 45, 60, 64, 67, and 276 each coordinate [4Fe-4S] cluster. One can recognise a Radical SAM core domain in the interval 46–265; that stretch reads WGEGTATFMI…GEVALSMGFK (220 aa).

The protein belongs to the radical SAM superfamily. Lipoyl synthase family. [4Fe-4S] cluster is required as a cofactor.

The protein localises to the cytoplasm. The catalysed reaction is [[Fe-S] cluster scaffold protein carrying a second [4Fe-4S](2+) cluster] + N(6)-octanoyl-L-lysyl-[protein] + 2 oxidized [2Fe-2S]-[ferredoxin] + 2 S-adenosyl-L-methionine + 4 H(+) = [[Fe-S] cluster scaffold protein] + N(6)-[(R)-dihydrolipoyl]-L-lysyl-[protein] + 4 Fe(3+) + 2 hydrogen sulfide + 2 5'-deoxyadenosine + 2 L-methionine + 2 reduced [2Fe-2S]-[ferredoxin]. Its pathway is protein modification; protein lipoylation via endogenous pathway; protein N(6)-(lipoyl)lysine from octanoyl-[acyl-carrier-protein]: step 2/2. Catalyzes the radical-mediated insertion of two sulfur atoms into the C-6 and C-8 positions of the octanoyl moiety bound to the lipoyl domains of lipoate-dependent enzymes, thereby converting the octanoylated domains into lipoylated derivatives. The protein is Lipoyl synthase of Pyrobaculum arsenaticum (strain DSM 13514 / JCM 11321 / PZ6).